Here is a 401-residue protein sequence, read N- to C-terminus: Acetate kinase (401 aa).

Asparagine 9 contacts Mg(2+). Lysine 16 contributes to the ATP binding site. Position 88 (arginine 88) interacts with substrate. Catalysis depends on aspartate 147, which acts as the Proton donor/acceptor. Residues 207–211 (HLGNG), 282–284 (DCR), and 333–337 (GIGEN) each bind ATP. Glutamate 388 lines the Mg(2+) pocket.

It belongs to the acetokinase family. Homodimer. The cofactor is Mg(2+). It depends on Mn(2+) as a cofactor.

It localises to the cytoplasm. The catalysed reaction is acetate + ATP = acetyl phosphate + ADP. Its pathway is metabolic intermediate biosynthesis; acetyl-CoA biosynthesis; acetyl-CoA from acetate: step 1/2. Functionally, catalyzes the formation of acetyl phosphate from acetate and ATP. Can also catalyze the reverse reaction. In Haemophilus influenzae (strain 86-028NP), this protein is Acetate kinase.